The following is a 377-amino-acid chain: Gastricsin (377 aa).

A signal peptide spans 1-5 (QLLEA). 2 propeptides (activation peptide) span residues 6-31 (AVVKVPLKKFKSIRETMKEKGLLGEF) and 32-48 (LRTHKYDPAWKYHFGDL). The 313-residue stretch at 62-374 (YFGEISIGTP…DLSNNRVGFA (313 aa)) folds into the Peptidase A1 domain. Residue Asp-80 is part of the active site. 2 cysteine pairs are disulfide-bonded: Cys-93/Cys-98 and Cys-256/Cys-260. Asp-265 is an active-site residue. The cysteines at positions 299 and 332 are disulfide-linked.

Belongs to the peptidase A1 family. In terms of processing, each pepsinogen is converted to corresponding pepsin at pH 2.0 in part as a result of the release of a 47 AA activation segment and in part as a result of stepwise proteolytic cleavage via an intermediate form(s).

The protein resides in the secreted. It carries out the reaction More restricted specificity than pepsin A, but shows preferential cleavage at Tyr-|-Xaa bonds. High activity on hemoglobin.. Its function is as follows. Hydrolyzes a variety of proteins. The protein is Gastricsin (PGC) of Macaca fuscata fuscata (Japanese macaque).